A 293-amino-acid polypeptide reads, in one-letter code: MSSSRYEPSWDVDLAPLLSCKLCLGEFPLEQMTTISQCQCIFCSLCLKQYVELLIKEGLETAISCPDSACPKQGHLLENEIECMVAGEVMQHYKRLQFEREVLLDPCRTWCPSSSCQAVCQLNEAEVQLPQPVQCPECSLRFCSACRADCHTGQACQEMLPITTFLPGENGSNLKSQEDEAPIKRCPKCKVYIERDEGCAQMMCKNCKHAFCWYCLESLDDDFLLIHYDKGPCRNKLGHSRASVIWHRTQVVGIFAGFGLLLLVASPFLLLATPFVLCCKCKCKRGDDDPLPT.

The segment at 16–237 is TRIAD supradomain; sequence PLLSCKLCLG…YDKGPCRNKL (222 aa). Zn(2+) is bound by residues Cys-20, Cys-23, Cys-43, Cys-46, Cys-111, Cys-116, Cys-135, Cys-138, Cys-143, Cys-146, His-151, Cys-156, Cys-186, and Cys-189. The RING-type 1 zinc-finger motif lies at 20–70; the sequence is CKLCLGEFPLEQMTTISQCQCIFCSLCLKQYVELLIKEGLETAISCPDSAC. The IBR-type zinc-finger motif lies at 91 to 156; sequence QHYKRLQFER…RADCHTGQAC (66 aa). An RING-type 2; atypical zinc finger spans residues 186–215; sequence CPKCKVYIERDEGCAQMMCKNCKHAFCWYC. The active site involves Cys-199. Positions 204, 207, 212, 215, 227, and 233 each coordinate Zn(2+). The chain crosses the membrane as a helical span at residues 251–271; the sequence is VVGIFAGFGLLLLVASPFLLL.

Belongs to the RBR family. RNF144 subfamily.

The protein localises to the membrane. The enzyme catalyses [E2 ubiquitin-conjugating enzyme]-S-ubiquitinyl-L-cysteine + [acceptor protein]-L-lysine = [E2 ubiquitin-conjugating enzyme]-L-cysteine + [acceptor protein]-N(6)-ubiquitinyl-L-lysine.. The protein operates within protein modification; protein ubiquitination. In terms of biological role, E3 ubiquitin-protein ligase which accepts ubiquitin from E2 ubiquitin-conjugating enzymes ube2l3 and ube2l6 in the form of a thioester and then directly transfers the ubiquitin to targeted substrates. The protein is Probable E3 ubiquitin-protein ligase RNF144A-B (rnf144ab) of Danio rerio (Zebrafish).